Here is a 332-residue protein sequence, read N- to C-terminus: Cysteine and histidine-rich domain-containing protein 1 (332 aa).

Ala-2 is modified (N-acetylalanine). The interval 2 to 77 is interaction with PPP5C; sequence ALLCYNRACG…KPPEPVKPEV (76 aa). Positions 5, 10, 24, 27, 42, and 43 each coordinate Zn(2+). CHORD domains follow at residues 5–64 and 157–216; these read CYNR…KGRH and CKNG…KGRH. The residue at position 47 (Thr-47) is a Phosphothreonine. Ser-51 is subject to Phosphoserine. Positions 59, 64, 157, 162, 176, 179, 194, 195, 211, and 216 each coordinate Zn(2+). The tract at residues 62–82 is disordered; that stretch reads GRHNSEKPPEPVKPEVKTTEK. Over residues 64–82 the composition is skewed to basic and acidic residues; it reads HNSEKPPEPVKPEVKTTEK. The tract at residues 65 to 316 is interaction with HSP90AA1 and HSP90AB1; it reads NSEKPPEPVK…AEPMQWASLE (252 aa). The region spanning 227-316 is the CS domain; the sequence is VVPCRHDWHQ…AEPMQWASLE (90 aa).

Interacts with HSP90AA1, HSP90AB1, PPP5C, ROCK1 and ROCK2.

Regulates centrosome duplication, probably by inhibiting the kinase activity of ROCK2. Proposed to act as co-chaperone for HSP90. May play a role in the regulation of NOD1 via a HSP90 chaperone complex. In vitro, has intrinsic chaperone activity. This function may be achieved by inhibiting association of ROCK2 with NPM1. Plays a role in ensuring the localization of the tyrosine kinase receptor EGFR to the plasma membrane, and thus ensures the subsequent regulation of EGFR activity and EGF-induced actin cytoskeleton remodeling. Involved in stress response. Prevents tumorigenesis. This chain is Cysteine and histidine-rich domain-containing protein 1 (CHORDC1), found in Macaca fascicularis (Crab-eating macaque).